The following is a 354-amino-acid chain: MNVVTPNGGDSVAARSWPGLLNPLLRGEDLSAEETAWAMDRIMSGEATDAQIAGFAVALRAKGETVDEVTGLVRAMYAHANTIEVPGRTVDIVGTGGDLAKTVNISTMSAIVIAGTGAKVVKHGNRAASSASGSSDVLEKLGVNLELTPRRVVEVAEAAGITFCFAVKFHPALRYAAKARKELGAQTTFNILGPLTNPAQVRSQAVGVADARMAPIVAGVLADRGNSALVFRGDDGLDELTTTATSRVWVVRDGVVREEPFDPRDVGLPIVPVEALRGADASYNADVARRLLDGEAGAVREAVLLNSAAALVALDPGTGTLTEQLAAKILVAAEAIDSGAAKQALERWIAASNA.

Residues Gly-94, 97–98, Thr-102, 104–107, 122–130, and Ser-134 contribute to the 5-phospho-alpha-D-ribose 1-diphosphate site; these read GD, NIST, and KHGNRAASS. Position 94 (Gly-94) interacts with anthranilate. Ser-106 is a binding site for Mg(2+). Residue Asn-125 participates in anthranilate binding. Residue Arg-180 coordinates anthranilate. Mg(2+)-binding residues include Asp-238 and Glu-239.

It belongs to the anthranilate phosphoribosyltransferase family. In terms of assembly, homodimer. Mg(2+) serves as cofactor.

The catalysed reaction is N-(5-phospho-beta-D-ribosyl)anthranilate + diphosphate = 5-phospho-alpha-D-ribose 1-diphosphate + anthranilate. The protein operates within amino-acid biosynthesis; L-tryptophan biosynthesis; L-tryptophan from chorismate: step 2/5. Catalyzes the transfer of the phosphoribosyl group of 5-phosphorylribose-1-pyrophosphate (PRPP) to anthranilate to yield N-(5'-phosphoribosyl)-anthranilate (PRA). The protein is Anthranilate phosphoribosyltransferase of Streptomyces griseus subsp. griseus (strain JCM 4626 / CBS 651.72 / NBRC 13350 / KCC S-0626 / ISP 5235).